We begin with the raw amino-acid sequence, 132 residues long: Pre-histone-like nucleoprotein (132 aa).

Residues 2 to 23 (AILISPSNNTGWGLGTHKLFGG) constitute a propeptide that is removed on maturation. A Nuclear localization signal motif is present at residues 124-132 (RRKRRVRSK).

Belongs to the adenoviridae histone-like nucleoprotein family. In terms of assembly, interacts with the core-capsid bridging protein; this interaction bridges the virus core to the capsid. Interacts with host NPM1; this interaction might play a role in placing the pre-histone-like nucleoprotein on the viral DNA or regulating viral gene expression. Interacts with host HMGB1; this interaction inhibits host immune response. Cleaved near the N-terminus by the viral protease during virion maturation to form the mature protein.

The protein resides in the virion. Its subcellular location is the host nucleus. It is found in the host nucleolus. Its function is as follows. Plays a role in the inhibition of host immune response within the nucleus. Interacts with cellular nucleosomes and immobilizes the host immune danger signal HMGB1 on chromatin. In turn, prevents HMGB1 release out of the cell and thus decreases inflammation. Also plays a role in the wrapping and condensation of the viral DNA. May also promote viral genome import into the nucleus. This is Pre-histone-like nucleoprotein from Canine adenovirus serotype 1 (strain RI261) (CAdV-1).